A 295-amino-acid chain; its full sequence is MGLFAVIDIGGTSIKYGVINEDGTLLETNDRDTEAYKGGLSIIEKVKDIIHELKINNDISGICVSTAGMVCPKEGKIVYAGPTIPNYTGVEVKKILEEEFNLPCFVENDVNCAALGEFFGGAGKGTHSMACLTIGTGIGGALIIDGKVLHGFSNSAGEIGYMMVNGEHIQDIASASALVKNVALRKGVEPSSIDGRYVLDNYENGDLICKEEVEKLADNLALGISNIVYLINPEVVVLGGGIMAREEVFRPLIENSLRKYLIESVYNNTKIAFAKLKNTAGMKGAYYNFKENFNK.

The protein belongs to the ROK (NagC/XylR) family.

This is an uncharacterized protein from Clostridium perfringens (strain 13 / Type A).